The chain runs to 464 residues: Serine/threonine-protein kinase 38-like (464 aa).

A2 carries the post-translational modification N-acetylalanine. Positions 64-89 are S100B binding; it reads KLRRSQHARKETEFLRLKRTRLGLDD. A Phosphothreonine modification is found at T75. Positions 90–383 constitute a Protein kinase domain; sequence FESLKVIGRG…VEEIKGHPFF (294 aa). ATP contacts are provided by residues 96–104 and K119; that span reads IGRGAFGEV. The active-site Proton acceptor is D213. S282 is modified (phosphoserine; by autocatalysis). The AGC-kinase C-terminal domain occupies 384–453; the sequence is EGVDWGHIRE…KRFEGLTQRG (70 aa). T442 carries the post-translational modification Phosphothreonine; by STK24/MST3.

Belongs to the protein kinase superfamily. AGC Ser/Thr protein kinase family. In terms of assembly, homodimeric S100B binds two molecules of STK38L. Interacts with MOB1 and MOB2. Interacts with MICAL1; leading to inhibit the protein kinase activity by antagonizing activation by MST1/STK4. It depends on Mg(2+) as a cofactor. In terms of tissue distribution, highly expressed in the large and small intestine, stomach and testis. High levels also present in the brain, in particular the neurocortex, basal forebrain, hippocampus, the amygdala, cerebellum and brainstem.

It is found in the cytoplasm. It localises to the cytoskeleton. Its subcellular location is the membrane. It catalyses the reaction L-seryl-[protein] + ATP = O-phospho-L-seryl-[protein] + ADP + H(+). It carries out the reaction L-threonyl-[protein] + ATP = O-phospho-L-threonyl-[protein] + ADP + H(+). Its activity is regulated as follows. Activated by binding of S100B which releases autoinhibitory N-lobe interactions, enabling ATP to bind and the autophosphorylation of Ser-282. Thr-442 then undergoes calcium-dependent phosphorylation by STK24/MST3. Interactions between phosphorylated Thr-442 and the N-lobe promote additional structural changes that complete the activation of the kinase. Autoinhibition is also released by the binding of MOB1/MOBKL1A and MOB2 to the N-terminal of STK38L. Functionally, involved in the regulation of structural processes in differentiating and mature neuronal cells. This Mus musculus (Mouse) protein is Serine/threonine-protein kinase 38-like.